The chain runs to 203 residues: Thymidylate kinase (203 aa).

Position 7-14 (7-14 (GPDGSGKS)) interacts with ATP.

Belongs to the thymidylate kinase family.

The catalysed reaction is dTMP + ATP = dTDP + ADP. In terms of biological role, phosphorylation of dTMP to form dTDP in both de novo and salvage pathways of dTTP synthesis. The polypeptide is Thymidylate kinase (Finegoldia magna (strain ATCC 29328 / DSM 20472 / WAL 2508) (Peptostreptococcus magnus)).